The primary structure comprises 465 residues: Neutrophil collagenase (465 aa).

Residues 1-20 form the signal peptide; sequence MFRLKTLPLLIFLHTQLANA. The propeptide at 21 to 100 is activation peptide; it reads FPVPEHLEEK…CGVPDSGDFL (80 aa). An N-linked (GlcNAc...) asparagine glycan is attached at Asn55. The Cysteine switch motif lies at 89-96; it reads PRCGVPDS. Cys91 lines the Zn(2+) pocket. An N-linked (GlcNAc...) asparagine glycan is attached at Asn112. Asp157 contacts Ca(2+). Residues His167 and Asp169 each coordinate Zn(2+). Residues Asp174, Gly175, Asn177, and Ile179 each contribute to the Ca(2+) site. His182 serves as a coordination point for Zn(2+). Ca(2+) contacts are provided by Gly189, Gly191, and Asp193. His195 contributes to the Zn(2+) binding site. Residues Asp197 and Glu200 each contribute to the Ca(2+) site. His217 lines the Zn(2+) pocket. The active site involves Glu218. His221 and His227 together coordinate Zn(2+). Hemopexin repeat units follow at residues 276–325, 326–372, 374–420, and 421–464; these read PKAC…WPFL, PNGL…GFPR, VQAI…FPGV, and NCRV…WLNC. Cys279 and Cys464 are disulfide-bonded. Residue Asp286 coordinates Ca(2+). Asp378 and Asp425 together coordinate Ca(2+).

It belongs to the peptidase M10A family. Ca(2+) serves as cofactor. Zn(2+) is required as a cofactor. In terms of tissue distribution, neutrophils. Expressed in uterus. Low levels in kidney and muscle.

The protein localises to the cytoplasmic granule. It localises to the secreted. It is found in the extracellular space. The protein resides in the extracellular matrix. It catalyses the reaction Cleavage of interstitial collagens in the triple helical domain. Unlike EC 3.4.24.7, this enzyme cleaves type III collagen more slowly than type I.. With respect to regulation, cannot be activated without removal of the activation peptide. Activated by matrilysin. Can degrade fibrillar type I, II, and III collagens. May play a role in the degradation of collagen fibers during uterine involution. This is Neutrophil collagenase (Mmp8) from Mus musculus (Mouse).